A 191-amino-acid polypeptide reads, in one-letter code: CASP-like protein 4C3 (191 aa).

The Cytoplasmic segment spans residues 1-29 (METGDSAVKSSQDVHYYGKSTAQKHRRSN). A helical membrane pass occupies residues 30–50 (GIILIFRALTFSFSLTSVIVM). At 51–72 (GTNRHRIDAQSRVAWYDFDPFR) the chain is on the extracellular side. The helical transmembrane segment at 73–93 (YVLAVNAIICIYSFVEIWLAV) threads the bilayer. Over 94–116 (YTYLKDTLFLPETFQVWFDYGHD) the chain is Cytoplasmic. Residues 117–137 (QGFAYLLFSANSAGIAMAQLL) traverse the membrane as a helical segment. Residues 138–162 (QSGNSLIHGAYRCSDAGVFCTQARA) lie on the Extracellular side of the membrane. The chain crosses the membrane as a helical span at residues 163-183 (SIGLGFGAFLFLALSSLLTGL). Residues 184–191 (RVARWYFS) are Cytoplasmic-facing.

This sequence belongs to the Casparian strip membrane proteins (CASP) family. Homodimer and heterodimers.

The protein localises to the cell membrane. This Physcomitrium patens (Spreading-leaved earth moss) protein is CASP-like protein 4C3.